The following is a 45-amino-acid chain: uncharacterized protein (45 aa).

This is an uncharacterized protein from Archaeoglobus fulgidus (strain ATCC 49558 / DSM 4304 / JCM 9628 / NBRC 100126 / VC-16).